The sequence spans 185 residues: ATP synthase subunit b, chloroplastic (185 aa).

The helical transmembrane segment at 31-49 threads the bilayer; sequence LINSGVVLGLPVYSGKGVL.

It belongs to the ATPase B chain family. F-type ATPases have 2 components, F(1) - the catalytic core - and F(0) - the membrane proton channel. F(1) has five subunits: alpha(3), beta(3), gamma(1), delta(1), epsilon(1). F(0) has four main subunits: a(1), b(1), b'(1) and c(10-14). The alpha and beta chains form an alternating ring which encloses part of the gamma chain. F(1) is attached to F(0) by a central stalk formed by the gamma and epsilon chains, while a peripheral stalk is formed by the delta, b and b' chains.

Its subcellular location is the plastid. It localises to the chloroplast thylakoid membrane. F(1)F(0) ATP synthase produces ATP from ADP in the presence of a proton or sodium gradient. F-type ATPases consist of two structural domains, F(1) containing the extramembraneous catalytic core and F(0) containing the membrane proton channel, linked together by a central stalk and a peripheral stalk. During catalysis, ATP synthesis in the catalytic domain of F(1) is coupled via a rotary mechanism of the central stalk subunits to proton translocation. Functionally, component of the F(0) channel, it forms part of the peripheral stalk, linking F(1) to F(0). This is ATP synthase subunit b, chloroplastic from Huperzia lucidula (Shining clubmoss).